We begin with the raw amino-acid sequence, 483 residues long: Lipoamide acyltransferase component of branched-chain alpha-keto acid dehydrogenase complex, mitochondrial (483 aa).

The N-terminal 75 residues, 1–75, are a transit peptide targeting the mitochondrion; sequence MIARRIWRSH…AMATDSNSGL (75 aa). One can recognise a Lipoyl-binding domain in the interval 76–150; the sequence is IDVPLAQTGE…KVGETLVRLA (75 aa). Position 116 is an N6-lipoyllysine (K116). Residues 183-220 enclose the Peripheral subunit-binding (PSBD) domain; that stretch reads LSTPAVRNLAKDLGIDINVITGTGKDGRVLKEDVLRFS. Residues H453 and D457 contribute to the active site.

Belongs to the 2-oxoacid dehydrogenase family. As to quaternary structure, forms a 24-polypeptide structural core with octahedral symmetry. Requires (R)-lipoate as cofactor. In terms of tissue distribution, expressed in the non-photosynthetic organs such as siliques, flowers and roots.

It localises to the mitochondrion matrix. It catalyses the reaction N(6)-[(R)-dihydrolipoyl]-L-lysyl-[protein] + 2-methylpropanoyl-CoA = N(6)-[(R)-S(8)-2-methylpropanoyldihydrolipoyl]-L-lysyl-[protein] + CoA. The branched-chain alpha-keto dehydrogenase complex catalyzes the overall conversion of alpha-keto acids to acyl-CoA and CO(2). It contains multiple copies of three enzymatic components: branched-chain alpha-keto acid decarboxylase (E1), lipoamide acyltransferase (E2) and lipoamide dehydrogenase (E3). Within this complex, the catalytic function of this enzyme is to accept, and to transfer to coenzyme A, acyl groups that are generated by the branched-chain alpha-keto acid decarboxylase component. Required during sugar starvation and acts under the control of a sugar-sensing mechanism involving Ser/Thr kinases and phosphatases. This Arabidopsis thaliana (Mouse-ear cress) protein is Lipoamide acyltransferase component of branched-chain alpha-keto acid dehydrogenase complex, mitochondrial (BCE2).